A 701-amino-acid chain; its full sequence is DNA ligase 2 (701 aa).

Residues 1–10 (MSPAPQNRQP) are compositionally biased toward polar residues. Positions 1 to 21 (MSPAPQNRQPSGVPVGGQFAA) are disordered. NAD(+) is bound by residues 64 to 68 (DAEFD), 111 to 112 (SL), and Glu-133. The N6-AMP-lysine intermediate role is filled by Lys-135. NAD(+) is bound by residues Arg-156, Glu-189, Lys-302, and Lys-326. Residues Cys-420, Cys-423, Cys-436, and Cys-441 each coordinate Zn(2+). A compositionally biased stretch (low complexity) spans 603-613 (KAAPAAGAKAP). The tract at residues 603-623 (KAAPAAGAKAPKLTKPDGKPM) is disordered. A BRCT domain is found at 615 to 701 (LTKPDGKPMN…FAQMVEDGEV (87 aa)).

It belongs to the NAD-dependent DNA ligase family. LigA subfamily. Mg(2+) is required as a cofactor. Requires Mn(2+) as cofactor.

It catalyses the reaction NAD(+) + (deoxyribonucleotide)n-3'-hydroxyl + 5'-phospho-(deoxyribonucleotide)m = (deoxyribonucleotide)n+m + AMP + beta-nicotinamide D-nucleotide.. DNA ligase that catalyzes the formation of phosphodiester linkages between 5'-phosphoryl and 3'-hydroxyl groups in double-stranded DNA using NAD as a coenzyme and as the energy source for the reaction. It is essential for DNA replication and repair of damaged DNA. This Pseudarthrobacter chlorophenolicus (strain ATCC 700700 / DSM 12829 / CIP 107037 / JCM 12360 / KCTC 9906 / NCIMB 13794 / A6) (Arthrobacter chlorophenolicus) protein is DNA ligase 2.